A 423-amino-acid polypeptide reads, in one-letter code: Putative competence-damage inducible protein (423 aa).

It belongs to the CinA family.

The chain is Putative competence-damage inducible protein from Streptococcus pyogenes serotype M18 (strain MGAS8232).